Here is an 861-residue protein sequence, read N- to C-terminus: Translation initiation factor IF-2 (861 aa).

Disordered regions lie at residues Met-1 to Ala-69 and Ala-92 to Lys-273. Over residues Gly-53–Gly-65 the composition is skewed to gly residues. Residues Ala-94–Asp-108 show a composition bias toward basic and acidic residues. Residues Ala-109 to Gln-120 show a composition bias toward low complexity. 2 stretches are compositionally biased toward basic and acidic residues: residues Arg-121–Ala-155 and Asp-163–Pro-186. Low complexity predominate over residues Pro-213–Arg-223. The span at Arg-255 to Lys-273 shows a compositional bias: basic and acidic residues. A tr-type G domain is found at Pro-357–Lys-527. Residues Gly-366–Thr-373 form a G1 region. Gly-366–Thr-373 lines the GTP pocket. Residues Gly-391–His-395 are G2. Residues Asp-413–Gly-416 are G3. GTP is bound by residues Asp-413–His-417 and Asn-467–Asp-470. The segment at Asn-467–Asp-470 is G4. Positions Ser-503–Lys-505 are G5.

The protein belongs to the TRAFAC class translation factor GTPase superfamily. Classic translation factor GTPase family. IF-2 subfamily.

The protein localises to the cytoplasm. One of the essential components for the initiation of protein synthesis. Protects formylmethionyl-tRNA from spontaneous hydrolysis and promotes its binding to the 30S ribosomal subunits. Also involved in the hydrolysis of GTP during the formation of the 70S ribosomal complex. This is Translation initiation factor IF-2 from Maricaulis maris (strain MCS10) (Caulobacter maris).